We begin with the raw amino-acid sequence, 459 residues long: Elongation factor 1-alpha 4 (459 aa).

Residues 5–242 (KTHINIVVIG…DCIIPPQRPT (238 aa)) form the tr-type G domain. The segment at 14 to 21 (GHVDSGKS) is G1. The interval 70–74 (GITID) is G2. Residues 91–94 (DAPG) form a G3 region. Residues 153-156 (NKMD) are G4. The segment at 194-196 (SGF) is G5. 5-glutamyl glycerylphosphorylethanolamine occurs at positions 301 and 374.

This sequence belongs to the TRAFAC class translation factor GTPase superfamily. Classic translation factor GTPase family. EF-Tu/EF-1A subfamily.

Its subcellular location is the cytoplasm. In terms of biological role, this protein promotes the GTP-dependent binding of aminoacyl-tRNA to the A-site of ribosomes during protein biosynthesis. The polypeptide is Elongation factor 1-alpha 4 (eft-4) (Oscheius tipulae).